The primary structure comprises 55 residues: MASANRVKIGLKCAECNDINYTTTKNSKTTTEKLELKKYCPRLKKHTVHKEVKLK.

The protein belongs to the bacterial ribosomal protein bL33 family.

The sequence is that of Large ribosomal subunit protein bL33 from Campylobacter fetus subsp. fetus (strain 82-40).